The chain runs to 71 residues: MKKGIHPNYSEVTVTCSCGNVIKTHSTVGRDLNLDVCGECHPFYTGKQRDVASGGRVDRFNKRFSVPGAKK.

4 residues coordinate Zn(2+): cysteine 16, cysteine 18, cysteine 37, and cysteine 40.

This sequence belongs to the bacterial ribosomal protein bL31 family. Type A subfamily. As to quaternary structure, part of the 50S ribosomal subunit. The cofactor is Zn(2+).

Functionally, binds the 23S rRNA. The sequence is that of Large ribosomal subunit protein bL31 from Pectobacterium atrosepticum (strain SCRI 1043 / ATCC BAA-672) (Erwinia carotovora subsp. atroseptica).